Consider the following 468-residue polypeptide: Hexokinase (468 aa).

The Hexokinase domain maps to 10-466; the sequence is AKQLAELEVV…SGKGAALIAD (457 aa). The hexokinase small subdomain stretch occupies residues 74–225; that stretch reads TGAEVGEAYA…NVPAVCKAIV (152 aa). 85 to 90 provides a ligand contact to ATP; the sequence is DFGGST. The segment at 163–189 is glucose-binding; it reads PVGFTFSFPCAQAALNSSFLIEWTKGF. Residues 226–455 form a hexokinase large subdomain region; the sequence is NDTVGTLVSC…KNIHYCIADD (230 aa).

Belongs to the hexokinase family.

The catalysed reaction is a D-hexose + ATP = a D-hexose 6-phosphate + ADP + H(+). It catalyses the reaction D-mannose + ATP = D-mannose 6-phosphate + ADP + H(+). It carries out the reaction D-fructose + ATP = D-fructose 6-phosphate + ADP + H(+). The enzyme catalyses D-glucose + ATP = D-glucose 6-phosphate + ADP + H(+). It functions in the pathway carbohydrate metabolism; hexose metabolism. Its pathway is carbohydrate degradation; glycolysis; D-glyceraldehyde 3-phosphate and glycerone phosphate from D-glucose: step 1/4. Its function is as follows. Catalyzes the phosphorylation of various hexoses to hexose 6-phosphate. This is Hexokinase (HXK) from Toxoplasma gondii.